The following is a 441-amino-acid chain: 5-hydroxytryptamine receptor 3B (441 aa).

A signal peptide spans 1-21 (MLSSVMAPLWACILVAAGILA). At 22 to 238 (TDTHHPQDSA…IQFNVVMRRH (217 aa)) the chain is on the extracellular side. N-linked (GlcNAc...) asparagine glycans are attached at residues asparagine 52, asparagine 96, asparagine 138, asparagine 168, and asparagine 203. Cysteines 155 and 169 form a disulfide. A helical membrane pass occupies residues 239–259 (PLVYVVSLLIPSIFLMLVDLG). Residues 260-268 (SFYLPPNCR) lie on the Cytoplasmic side of the membrane. The chain crosses the membrane as a helical span at residues 269–286 (ARIVFKTSVLVGYTVFRV). Asparagine 287 carries N-linked (GlcNAc...) asparagine glycosylation. The Extracellular segment spans residues 287–303 (NMSNQVPRSVGSTPLIG). A helical membrane pass occupies residues 304–324 (HFFTICMAFLVLSLAKSIVLV). Residues 325–414 (KFLHDEQRGG…WLVLLSRFDR (90 aa)) are Cytoplasmic-facing. Residues 381-413 (VWSQLQSISNYLQTQDQTDQQEAEWLVLLSRFD) are HA-stretch; determines single-channel conductance in 5-HT3 receptors. The helical transmembrane segment at 415-435 (LLFQSYLFMLGIYTITLCSLW) threads the bilayer. Residues 436-441 (ALWGGV) lie on the Extracellular side of the membrane.

This sequence belongs to the ligand-gated ion channel (TC 1.A.9) family. 5-hydroxytryptamine receptor (TC 1.A.9.2) subfamily. HTR3B sub-subfamily. In terms of assembly, forms homopentameric as well as heteropentameric serotonin-activated cation-selective channel complexes with HTR3A. The homomeric complex is not functional. Heteropentameric complexes display properties which resemble that of neuronal serotonin-activated channels in vivo. In terms of processing, N-glycosylation required for membrane localization. Expressed in the brain cortex, in the caudate nucleus, the hippocampus, the thalamus and the amygdala. Detected in the kidney and testis as well as in monocytes of the spleen, small and large intestine, uterus, prostate, ovary and placenta.

The protein localises to the postsynaptic cell membrane. Its subcellular location is the cell membrane. It catalyses the reaction Na(+)(in) = Na(+)(out). The catalysed reaction is K(+)(in) = K(+)(out). It carries out the reaction Ca(2+)(in) = Ca(2+)(out). In terms of biological role, forms serotonin (5-hydroxytryptamine/5-HT3)-activated cation-selective channel complexes, which when activated cause fast, depolarizing responses in neurons. In Homo sapiens (Human), this protein is 5-hydroxytryptamine receptor 3B.